Reading from the N-terminus, the 317-residue chain is Acetyl-coenzyme A carboxylase carboxyl transferase subunit alpha (317 aa).

In terms of domain architecture, CoA carboxyltransferase C-terminal spans 39 to 293; that stretch reads RLKKKSISLT…KTSLAQGVAE (255 aa).

It belongs to the AccA family. Acetyl-CoA carboxylase is a heterohexamer composed of biotin carboxyl carrier protein (AccB), biotin carboxylase (AccC) and two subunits each of ACCase subunit alpha (AccA) and ACCase subunit beta (AccD).

The protein localises to the cytoplasm. It carries out the reaction N(6)-carboxybiotinyl-L-lysyl-[protein] + acetyl-CoA = N(6)-biotinyl-L-lysyl-[protein] + malonyl-CoA. It participates in lipid metabolism; malonyl-CoA biosynthesis; malonyl-CoA from acetyl-CoA: step 1/1. Functionally, component of the acetyl coenzyme A carboxylase (ACC) complex. First, biotin carboxylase catalyzes the carboxylation of biotin on its carrier protein (BCCP) and then the CO(2) group is transferred by the carboxyltransferase to acetyl-CoA to form malonyl-CoA. This is Acetyl-coenzyme A carboxylase carboxyl transferase subunit alpha from Marinobacter nauticus (strain ATCC 700491 / DSM 11845 / VT8) (Marinobacter aquaeolei).